A 401-amino-acid polypeptide reads, in one-letter code: NADH-dependent flavin oxidoreductase iliE (401 aa).

FMN is bound by residues 25–28 and glutamine 107; that span reads ASMS. Substrate is bound at residue 188–191; that stretch reads HAAH. 346–347 provides a ligand contact to FMN; sequence AR.

It belongs to the NADH:flavin oxidoreductase/NADH oxidase family.

Functionally, NADH-dependent flavin oxidoreductase; part of the gene cluster that mediates the biosynthesis of ilicicolin H, a 4-hydroxy-2-pyridonealkaloid that has potent and broad antifungal activities by inhibiting the mitochondrial respiration chain. The biosynthesis of ilicicolin H starts with formation of the tetramic acid by the hybrid PKS-NRPS synthetase iliA with the partnering trans-enoyl reductase iliB since iliA lacks a designated enoylreductase (ER) domain. The cytochrome P450 monooxygenase iliC then catalyzes the ring expansion of the tetramate to the acyclic 2-pyridone. The pericyclase iliD further converts the acyclic 2-pyridone into 8-epi-ilicicolin H. 8-epi-ilicicolin H might then spontaneously convert to ilicicolin H since ilicicolin H is produced in the absence of the epimerase iliE, in contrast to what was observed for the Talaromyces variabilis ilicolin H biosynthetic pathway. The protein is NADH-dependent flavin oxidoreductase iliE of Hypocrea jecorina (strain QM6a) (Trichoderma reesei).